The primary structure comprises 417 residues: Zinc finger CCCH domain-containing protein ZFN-like (417 aa).

C3H1-type zinc fingers lie at residues 31-58 and 75-103; these read PGEP…HPPN and RLGQ…HPKD. The C3H1-type 3; degenerate zinc-finger motif lies at 121-149; that stretch reads RPNESERAYYLRTGQCKFGNTCKFHHPQP. 2 C3H1-type zinc fingers span residues 278–306 and 324–352; these read RPDQ…HPRE and RPGE…HPMG. The segment at 383-417 is disordered; it reads SSEGLVESGTAKPRRLSLSETRPIPPGDDNIDDEG.

It localises to the nucleus. The sequence is that of Zinc finger CCCH domain-containing protein ZFN-like from Pisum sativum (Garden pea).